Reading from the N-terminus, the 218-residue chain is Uracil-DNA glycosylase (218 aa).

The Proton acceptor role is filled by D68.

This sequence belongs to the uracil-DNA glycosylase (UDG) superfamily. UNG family. Homodimer. Interacts with protein OPG148. Component of the Uracil-DNA glycosylase(UDG)-OPG148-polymerase complex; OPG148 and UDG form a heterodimeric processivity factor that associates with OPG71 to form the processive polymerase holoenzyme.

The enzyme catalyses Hydrolyzes single-stranded DNA or mismatched double-stranded DNA and polynucleotides, releasing free uracil.. In terms of biological role, plays an essential role in viral replication as a component of the DNA polymerase processivity factor. Excises uracil residues from the DNA which can arise as a result of misincorporation of dUMP residues by DNA polymerase or due to deamination of cytosine. The chain is Uracil-DNA glycosylase (OPG116) from Vaccinia virus (strain Ankara) (VACV).